Here is a 581-residue protein sequence, read N- to C-terminus: 2-succinyl-5-enolpyruvyl-6-hydroxy-3-cyclohexene-1-carboxylate synthase (581 aa).

The protein belongs to the TPP enzyme family. MenD subfamily. As to quaternary structure, homodimer. Requires Mg(2+) as cofactor. Mn(2+) serves as cofactor. Thiamine diphosphate is required as a cofactor.

The enzyme catalyses isochorismate + 2-oxoglutarate + H(+) = 5-enolpyruvoyl-6-hydroxy-2-succinyl-cyclohex-3-ene-1-carboxylate + CO2. It participates in quinol/quinone metabolism; 1,4-dihydroxy-2-naphthoate biosynthesis; 1,4-dihydroxy-2-naphthoate from chorismate: step 2/7. Its pathway is quinol/quinone metabolism; menaquinone biosynthesis. Functionally, catalyzes the thiamine diphosphate-dependent decarboxylation of 2-oxoglutarate and the subsequent addition of the resulting succinic semialdehyde-thiamine pyrophosphate anion to isochorismate to yield 2-succinyl-5-enolpyruvyl-6-hydroxy-3-cyclohexene-1-carboxylate (SEPHCHC). The protein is 2-succinyl-5-enolpyruvyl-6-hydroxy-3-cyclohexene-1-carboxylate synthase of Chlorobium phaeobacteroides (strain BS1).